A 373-amino-acid polypeptide reads, in one-letter code: Leucine-, isoleucine-, valine-, threonine-, and alanine-binding protein (373 aa).

Positions 1 to 26 (MKKGTQRLSRLFAAMAIAGFASYSMA) are cleaved as a signal peptide. A disulfide bond links C80 and C105.

Belongs to the leucine-binding protein family.

Its subcellular location is the periplasm. Its function is as follows. Component of the high-affinity leucine, isoleucine, valine transport system I (LIV-I), which is operative without Na(+) and is specific for alanine and threonine, in addition to branched-chain amino acids. Binds L-leucine, L-isoleucine, L-valine, L-threonine and L-alanine with nanomolar affinities. Can also bind L-homoserine with high affinity. In Pseudomonas aeruginosa (strain ATCC 15692 / DSM 22644 / CIP 104116 / JCM 14847 / LMG 12228 / 1C / PRS 101 / PAO1), this protein is Leucine-, isoleucine-, valine-, threonine-, and alanine-binding protein (braC).